The sequence spans 188 residues: RxLR effector protein Avh241 (188 aa).

The N-terminal stretch at 1–16 (MRQYCLLLIVLALAAA) is a signal peptide. Residues 43 to 58 (RLLRSEPQDEDTFEDR) carry the RxLR-dEER motif. The Host plasma membrane localization motif motif lies at 73–78 (GAAKAK).

Belongs to the RxLR effector family.

It is found in the secreted. The protein localises to the host cell membrane. In terms of biological role, effector that triggers cell death in a variety of plant species (including tobacco, tomato and soybean), regardless of the Rps genes present. Avh241 interacts with the plant immune system via at least two different mechanisms, one recognized by plants dependent on subcellular localization and one promoting infection independent on membrane localization. The cell death triggered by Avh241 in N.benthamiana requires the two host mitogen-activated protein kinases, MEK2 and WIPK. This Phytophthora sojae (strain P6497) (Soybean stem and root rot agent) protein is RxLR effector protein Avh241.